Consider the following 259-residue polypeptide: UPF0246 protein NGK_0633 (259 aa).

It belongs to the UPF0246 family.

In Neisseria gonorrhoeae (strain NCCP11945), this protein is UPF0246 protein NGK_0633.